The following is a 191-amino-acid chain: ATP-dependent Clp protease proteolytic subunit 1 (191 aa).

Serine 91 (nucleophile) is an active-site residue. Residue histidine 116 is part of the active site.

This sequence belongs to the peptidase S14 family. As to quaternary structure, fourteen ClpP subunits assemble into 2 heptameric rings which stack back to back to give a disk-like structure with a central cavity, resembling the structure of eukaryotic proteasomes.

The protein localises to the cytoplasm. It carries out the reaction Hydrolysis of proteins to small peptides in the presence of ATP and magnesium. alpha-casein is the usual test substrate. In the absence of ATP, only oligopeptides shorter than five residues are hydrolyzed (such as succinyl-Leu-Tyr-|-NHMec, and Leu-Tyr-Leu-|-Tyr-Trp, in which cleavage of the -Tyr-|-Leu- and -Tyr-|-Trp bonds also occurs).. In terms of biological role, cleaves peptides in various proteins in a process that requires ATP hydrolysis. Has a chymotrypsin-like activity. Plays a major role in the degradation of misfolded proteins. The polypeptide is ATP-dependent Clp protease proteolytic subunit 1 (Chlamydia caviae (strain ATCC VR-813 / DSM 19441 / 03DC25 / GPIC) (Chlamydophila caviae)).